A 345-amino-acid chain; its full sequence is Phosphoribosylformylglycinamidine cyclo-ligase (345 aa).

It belongs to the AIR synthase family.

The protein resides in the cytoplasm. It catalyses the reaction 2-formamido-N(1)-(5-O-phospho-beta-D-ribosyl)acetamidine + ATP = 5-amino-1-(5-phospho-beta-D-ribosyl)imidazole + ADP + phosphate + H(+). It functions in the pathway purine metabolism; IMP biosynthesis via de novo pathway; 5-amino-1-(5-phospho-D-ribosyl)imidazole from N(2)-formyl-N(1)-(5-phospho-D-ribosyl)glycinamide: step 2/2. In Shewanella putrefaciens (strain CN-32 / ATCC BAA-453), this protein is Phosphoribosylformylglycinamidine cyclo-ligase.